The following is a 389-amino-acid chain: MKHPFQILTSSTDGKLLIASASSPSKESSLLLLLPELGDVLCQQNVPQPIYINYLETGPDKVLITADVDKNITIYKLENNELHQLKQQQMPKRLSGISTLNNDAIVCDSLGDVYQITIDTQPAVKKEDLKPLLGHTSPLTAVVAAQYKNPPKSFLITSDRDEHIRVSNYPKSYVIKGFLYGHTQFVSQIHLFEICKESRLVSGGGEGKLFFWDWFREVLITEFDLMPYVEEYLHEFHIKKSSKTKEEQDVQKEQEVENIQPKYEIGVQKIDSIEGEDGVFIVTLVENTSCLVVVHFTDEAKHAQTIQLAAPAVTFAIVGNKLFVSLDAENDNILTIYKFVDGQFVNDDEAQSSIAERIILANPINVEDKSKFAPFYSINQLRKRGNNYS.

WD repeat units lie at residues 44–86, 134–179, and 184–222; these read QNVP…HQLK, GHTS…KGFL, and QFVS…LITE.

Belongs to the WD repeat TRM82 family. In terms of assembly, forms a heterodimer with the catalytic subunit TRM8.

The protein localises to the nucleus. It functions in the pathway tRNA modification; N(7)-methylguanine-tRNA biosynthesis. Its function is as follows. Required for the formation of N(7)-methylguanine at position 46 (m7G46) in tRNA. In the complex, it is required to stabilize and induce conformational changes of the catalytic subunit. This is tRNA (guanine-N(7)-)-methyltransferase non-catalytic subunit TRM82 from Lodderomyces elongisporus (strain ATCC 11503 / CBS 2605 / JCM 1781 / NBRC 1676 / NRRL YB-4239) (Yeast).